We begin with the raw amino-acid sequence, 647 residues long: Paraneoplastic antigen Ma6E (647 aa).

Disordered regions lie at residues 111–199, 227–254, 508–580, and 608–647; these read QPQG…AGGA, GAAG…RAAG, AAAP…VPWG, and RGQE…SQGK. Gly residues-rich tracts occupy residues 122 to 149, 158 to 199, and 227 to 251; these read GEGG…GEAG, GEAG…AGGA, and GAAG…GEGR. Low complexity predominate over residues 517–570; the sequence is PAAAQASPAQGNASEAGPGAEDAAEAASATKEAARGAPAAGEGESAPAGPEGLG. Over residues 625 to 636 the composition is skewed to acidic residues; it reads EEPENEDEDGAG.

This chain is Paraneoplastic antigen Ma6E, found in Homo sapiens (Human).